The chain runs to 110 residues: MGGASKKPISTMEKRLKKEAEKQQKAEEKKKGPSKTGKEIISRAVTIDEETKKKVLDEIKKESIITPYALATKSGISISVARKILKELENQNVVKLYSKNRRLEIYIAAS.

Residues 1-37 (MGGASKKPISTMEKRLKKEAEKQQKAEEKKKGPSKTG) form a disordered region. Basic and acidic residues predominate over residues 12–37 (MEKRLKKEAEKQQKAEEKKKGPSKTG).

This sequence belongs to the eukaryotic ribosomal protein eS25 family.

In Saccharolobus solfataricus (strain ATCC 35092 / DSM 1617 / JCM 11322 / P2) (Sulfolobus solfataricus), this protein is Small ribosomal subunit protein eS25 (rps25e).